An 83-amino-acid polypeptide reads, in one-letter code: Large ribosomal subunit protein uL23 (83 aa).

This sequence belongs to the universal ribosomal protein uL23 family. Part of the 50S ribosomal subunit. Contacts protein L29.

In terms of biological role, binds to 23S rRNA. One of the proteins that surrounds the polypeptide exit tunnel on the outside of the ribosome. In Archaeoglobus fulgidus (strain ATCC 49558 / DSM 4304 / JCM 9628 / NBRC 100126 / VC-16), this protein is Large ribosomal subunit protein uL23.